A 211-amino-acid chain; its full sequence is Small ribosomal subunit protein uS3 (211 aa).

A KH type-2 domain is found at 39 to 107 (VTKYVESSFA…VPSLNVVEVK (69 aa)).

The protein belongs to the universal ribosomal protein uS3 family. In terms of assembly, part of the 30S ribosomal subunit. Forms a tight complex with proteins S10 and S14.

Functionally, binds the lower part of the 30S subunit head. Binds mRNA in the 70S ribosome, positioning it for translation. The polypeptide is Small ribosomal subunit protein uS3 (Neorickettsia sennetsu (strain ATCC VR-367 / Miyayama) (Ehrlichia sennetsu)).